The primary structure comprises 389 residues: 1-deoxy-D-xylulose 5-phosphate reductoisomerase (389 aa).

Residues Ser11, Gly12, Ser13, Val14, Asn39, and Asn122 each coordinate NADPH. Lys123 is a binding site for 1-deoxy-D-xylulose 5-phosphate. Residue Glu124 participates in NADPH binding. Mn(2+) is bound at residue Asp148. Residues Ser149, Glu150, Ser174, and His197 each coordinate 1-deoxy-D-xylulose 5-phosphate. Residue Glu150 coordinates Mn(2+). Gly203 serves as a coordination point for NADPH. Residues Ser210, Asn215, Lys216, and Glu219 each contribute to the 1-deoxy-D-xylulose 5-phosphate site. Residue Glu219 participates in Mn(2+) binding.

The protein belongs to the DXR family. The cofactor is Mg(2+). Mn(2+) is required as a cofactor.

The enzyme catalyses 2-C-methyl-D-erythritol 4-phosphate + NADP(+) = 1-deoxy-D-xylulose 5-phosphate + NADPH + H(+). The protein operates within isoprenoid biosynthesis; isopentenyl diphosphate biosynthesis via DXP pathway; isopentenyl diphosphate from 1-deoxy-D-xylulose 5-phosphate: step 1/6. Its function is as follows. Catalyzes the NADPH-dependent rearrangement and reduction of 1-deoxy-D-xylulose-5-phosphate (DXP) to 2-C-methyl-D-erythritol 4-phosphate (MEP). In Leptospira interrogans serogroup Icterohaemorrhagiae serovar Lai (strain 56601), this protein is 1-deoxy-D-xylulose 5-phosphate reductoisomerase.